The primary structure comprises 342 residues: S-adenosylmethionine:tRNA ribosyltransferase-isomerase (342 aa).

This sequence belongs to the QueA family. As to quaternary structure, monomer.

It localises to the cytoplasm. The enzyme catalyses 7-aminomethyl-7-carbaguanosine(34) in tRNA + S-adenosyl-L-methionine = epoxyqueuosine(34) in tRNA + adenine + L-methionine + 2 H(+). The protein operates within tRNA modification; tRNA-queuosine biosynthesis. Functionally, transfers and isomerizes the ribose moiety from AdoMet to the 7-aminomethyl group of 7-deazaguanine (preQ1-tRNA) to give epoxyqueuosine (oQ-tRNA). The protein is S-adenosylmethionine:tRNA ribosyltransferase-isomerase of Oceanobacillus iheyensis (strain DSM 14371 / CIP 107618 / JCM 11309 / KCTC 3954 / HTE831).